We begin with the raw amino-acid sequence, 337 residues long: Cysteine proteinase 3 (337 aa).

Residues 1 to 21 (MRLSITLIFTLIVLSISFISA) form the signal peptide. The propeptide at 22 to 120 (GNVFSHKQYQ…GLRLNRPQFK (99 aa)) is activation peptide. Cystine bridges form between Cys142-Cys185, Cys176-Cys219, and Cys277-Cys326. Cys145 is a catalytic residue. Active-site residues include His284 and Asn304.

Belongs to the peptidase C1 family.

The protein resides in the lysosome. In Dictyostelium discoideum (Social amoeba), this protein is Cysteine proteinase 3 (cprC).